The following is a 137-amino-acid chain: Nucleoside diphosphate kinase (137 aa).

ATP-binding residues include Lys9, Phe58, Arg86, Thr92, Arg103, and Asn113. The active-site Pros-phosphohistidine intermediate is His121.

Belongs to the NDK family. Homotetramer. Mg(2+) serves as cofactor.

The protein resides in the cytoplasm. It carries out the reaction a 2'-deoxyribonucleoside 5'-diphosphate + ATP = a 2'-deoxyribonucleoside 5'-triphosphate + ADP. The enzyme catalyses a ribonucleoside 5'-diphosphate + ATP = a ribonucleoside 5'-triphosphate + ADP. Its function is as follows. Major role in the synthesis of nucleoside triphosphates other than ATP. The ATP gamma phosphate is transferred to the NDP beta phosphate via a ping-pong mechanism, using a phosphorylated active-site intermediate. The sequence is that of Nucleoside diphosphate kinase from Streptococcus pneumoniae (strain Hungary19A-6).